A 503-amino-acid polypeptide reads, in one-letter code: Putative (R)-citramalate synthase CimA (503 aa).

In terms of domain architecture, Pyruvate carboxyltransferase spans 9-257; the sequence is IRFFDTTLRD…DTGIATEELY (249 aa).

This sequence belongs to the alpha-IPM synthase/homocitrate synthase family. In terms of assembly, homodimer.

The catalysed reaction is pyruvate + acetyl-CoA + H2O = (3R)-citramalate + CoA + H(+). Its pathway is amino-acid biosynthesis; L-isoleucine biosynthesis; 2-oxobutanoate from pyruvate: step 1/3. Functionally, catalyzes the condensation of pyruvate and acetyl-coenzyme A to form (R)-citramalate. This chain is Putative (R)-citramalate synthase CimA, found in Methanoculleus marisnigri (strain ATCC 35101 / DSM 1498 / JR1).